The following is a 495-amino-acid chain: MTVLIEAHGIHKQFSGVPVLRGIDFTLLSGQVHALMGGNGAGKSTLMKIIAGVETPDSGELNVEGKPFARLKPGQAHQLGIYLVPQEPMLFPNLTVRENILFRLPRGNDPEKRLADKLQQLQCQLNLDAAASTLEVADQQMVEILRGLMRDAKILILDEPTASLTPGETERLFRQIRALQDLGVGIVFISHKLPEIRQLASHVSVMRDGAVVLSGETTQFDDTALITAMTPVSREQGLSDTQKLWLALPGNRRTQAQDFPVLRVEDLTGEGFIDLSLEIYAGEIVGLAGLVGSGRTEFAETLYGLRPTRGGRIWLENQEIGEDSVLTRLEKGLVYLPEDRQVSGLFLDAPIRWNTVALNEPSLWQQRKREAAVVERYHRALGIKLNHPDQIVRTLSGGNQQKVLLARCLEANPLLLIVDEPTRGVDVSARADIYQLIKSVAAQNVAVLMISSDLDEFPGLADRVLVMHQGMFSGELPRHAVSLDRMMALAFGGQS.

2 ABC transporter domains span residues 5–233 (IEAH…TPVS) and 256–494 (AQDF…FGGQ). 37-44 (GGNGAGKS) serves as a coordination point for ATP.

It belongs to the ABC transporter superfamily. AI-2 autoinducer porter (TC 3.A.1.2.8) family. As to quaternary structure, the complex is composed of two ATP-binding proteins (LsrA), two transmembrane proteins (LsrC and LsrD) and a solute-binding protein (LsrB).

It localises to the cell inner membrane. It carries out the reaction ATP + H2O + (2R,4S)-2-methyl-2,3,3,4-tetrahydroxytetrahydrofuran-[AI-2-binding protein]Side 1 = ADP + phosphate + (2R,4S)-2-methyl-2,3,3,4-tetrahydroxytetrahydrofuranSide 2 + [AI-2-binding protein]Side 1.. Its function is as follows. Part of the ABC transporter complex LsrABCD involved in autoinducer 2 (AI-2) import. Responsible for energy coupling to the transport system. The polypeptide is Autoinducer 2 import ATP-binding protein LsrA (lsrA) (Enterobacter sp. (strain 638)).